A 164-amino-acid chain; its full sequence is 17.8 kDa heat shock protein (164 aa).

One can recognise a sHSP domain in the interval 20–154 (VVAGEARPPM…HAGNGKAAGD (135 aa)). The segment at 68–93 (GEHEDANNAAKAGKASGEEEEENDGV) is disordered.

This sequence belongs to the small heat shock protein (HSP20) family. In terms of assembly, may form oligomeric structures.

It is found in the cytoplasm. The sequence is that of 17.8 kDa heat shock protein (HSP17.8) from Oryza sativa subsp. japonica (Rice).